The sequence spans 284 residues: Asialoglycoprotein receptor 1 (284 aa).

Topologically, residues 1 to 39 (MTKDYQDFQHLDNENDHHQLQRGPPPAPRLLQRLCSGFR) are cytoplasmic. The Endocytosis signal motif lies at 5–8 (YQDF). A lipid anchor (S-palmitoyl cysteine) is attached at C35. Residues 40 to 60 (LFLLSLGLSILLLVVVCVITS) traverse the membrane as a helical; Signal-anchor for type II membrane protein segment. The stretch at 58–122 (ITSQNSQLRE…EDLREDHSRL (65 aa)) forms a coiled coil. Residues 61–284 (QNSQLREDLR…VCETELGKAN (224 aa)) lie on the Extracellular side of the membrane. N-linked (GlcNAc...) asparagine glycans are attached at residues N75, N78, and N146. 3 disulfides stabilise this stretch: C153/C164, C181/C276, and C254/C268. In terms of domain architecture, C-type lectin spans 160-277 (YEGSCYWFSS…CRRPYRWVCE (118 aa)). Ca(2+) contacts are provided by V190, E196, D215, Q239, D241, D242, E252, D253, N264, D265, and E277.

As to quaternary structure, interacts with LASS2. Phosphorylated on a cytoplasmic Ser residue. In terms of tissue distribution, expressed exclusively in hepatic parenchymal cells.

It localises to the membrane. In terms of biological role, mediates the endocytosis of plasma glycoproteins to which the terminal sialic acid residue on their complex carbohydrate moieties has been removed. The receptor recognizes terminal galactose and N-acetylgalactosamine units. After ligand binding to the receptor, the resulting complex is internalized and transported to a sorting organelle, where receptor and ligand are disassociated. The receptor then returns to the cell membrane surface. This chain is Asialoglycoprotein receptor 1 (Asgr1), found in Rattus norvegicus (Rat).